The primary structure comprises 940 residues: MKRQSVSEIREIFLNYFKDKAHAVVPSSSLLPAGDPTLLFTTAGMVQFKPLFTGAVELPYTRATSCQKCLRTTDLEVVGKTERHCTFFEMLGNFSFGDYFKEEAIDYALDCSVNHLGFDKEKIWVTVYTDDDEAEKIWITKGIPKERIMRLGKKDNFWGPAGDSGACGPCSELYLDRGVEKGGPDCATSGTCRPGCDCDRFLEFWNIVFNQFNQDTEGNLHPLKQTGIDTGSGLERVALLLQGADSVYDTNELRKIISFYEELSGIKYDDVITLSKMPTQKNNTARIAANQKAAFRVVTDHIRSVLFSIGDGIYPDRTGRGYVIRRLIRRATLFGRKLNFKEPFLYKLVDKVVEIYKPRYPELGKNSAAIQKTILAEEELFLKTLELGLEKIETLVAKTKTSGKTIFSGADAFLLYGTYGFPAEMTEEIVAEQGLDFDKKGFQEELEKDRQFSRESWKANKVSLMTGQSVEKTEFLGYSSLSGKGNIIHLFNENKPAGALKEGQAGAIVLNKTPFYPEGGGQVGDTGFLRQGKNVFKVLDTQKENDVILHFGEVLSGEFSIAQELEAEVEAARRERLRFHHSGTHLLNGALRNLLGDHVLQKGSVVSPEYLRFDFSHPSALTSKEIRKIESWVNESIRKNYPVVTKELPIEDAKKIGAVATFGEKYGDRVRVVQMGDASVEFCGGTHVSHTGEIGYFFIKKESSPGAGNRRIEGVCGPAVIETFQNRFAELTESVQNLNLKIKSELDNEGSKILVNSNVPGPDEIREKLEKEGATAVTFFRDLSEEIASQIEESTSAFLKMKKSLESRDFENNASVIEKVFASSMDTGVGKIVSAIFDDKDPNSLKGLSDNLKVREKNLLVILGSKNADNASVVITCSSQLVSKGIHCGDLVRTVCEMLGGKGGGKPDMAQGGGKEKQNLESAISFAIQLAKQTLTGEKV.

Zn(2+)-binding residues include histidine 581, histidine 585, cysteine 683, and histidine 687.

It belongs to the class-II aminoacyl-tRNA synthetase family. It depends on Zn(2+) as a cofactor.

It is found in the cytoplasm. The catalysed reaction is tRNA(Ala) + L-alanine + ATP = L-alanyl-tRNA(Ala) + AMP + diphosphate. Its function is as follows. Catalyzes the attachment of alanine to tRNA(Ala) in a two-step reaction: alanine is first activated by ATP to form Ala-AMP and then transferred to the acceptor end of tRNA(Ala). Also edits incorrectly charged Ser-tRNA(Ala) and Gly-tRNA(Ala) via its editing domain. The polypeptide is Alanine--tRNA ligase (Leptospira borgpetersenii serovar Hardjo-bovis (strain L550)).